Reading from the N-terminus, the 688-residue chain is NADPH-dependent diflavin oxidoreductase 1 (688 aa).

The tract at residues 26–76 is disordered; the sequence is HLHRHADTSPTNQHNTSHKMTTTEPIHVTTGSGESRDHTEPRHVTPTSPNA. Positions 33 to 58 are enriched in polar residues; sequence TSPTNQHNTSHKMTTTEPIHVTTGSG. Residues 59-68 are compositionally biased toward basic and acidic residues; it reads ESRDHTEPRH. A Flavodoxin-like domain is found at 82–227; the sequence is ITIAYATETG…MYNEWQARFC (146 aa). FMN is bound by residues 88–93, 136–139, 174–183, and D209; these read TETGNA, STTG, and LGDSSYPRFN. The FAD-binding FR-type domain maps to 277–543; sequence KDVLQGTVVG…KHSTPIPDLD (267 aa). Residues R453, 483–486, and 515–518 contribute to the FAD site; these read RLFS and GVLT. NADP(+) is bound by residues T554, 607-608, and 613-617; these read SR and GGYVQ. Position 688 (W688) interacts with FAD.

This sequence belongs to the NADPH-dependent diflavin oxidoreductase NDOR1 family. The protein in the N-terminal section; belongs to the flavodoxin family. It in the C-terminal section; belongs to the flavoprotein pyridine nucleotide cytochrome reductase family. In terms of assembly, interacts with DRE2; as part of the cytosolic iron-sulfur (Fe-S) protein assembly (CIA) machinery. FAD is required as a cofactor. The cofactor is FMN.

Its subcellular location is the cytoplasm. The protein localises to the mitochondrion. It catalyses the reaction 2 oxidized [2Fe-2S]-[protein] + NADPH = 2 reduced [2Fe-2S]-[protein] + NADP(+) + H(+). In terms of biological role, NADPH-dependent reductase which is a central component of the cytosolic iron-sulfur (Fe-S) protein assembly (CIA) machinery. Transfers electrons from NADPH via its FAD and FMN prosthetic groups to the [2Fe-2S] cluster of DRE2, another key component of the CIA machinery. In turn, this reduced cluster provides electrons for assembly of cytosolic iron-sulfur cluster proteins. Positively controls H(2)O(2)-induced cell death. The protein is NADPH-dependent diflavin oxidoreductase 1 of Yarrowia lipolytica (strain CLIB 122 / E 150) (Yeast).